Consider the following 159-residue polypeptide: Allergen Arg r 1 (159 aa).

Positions 1–16 are cleaved as a signal peptide; it reads MALIILLVACLSVVSA. 2 cysteine pairs are disulfide-bonded: C50–C155 and C109–C134.

It belongs to the calycin superfamily. Histamine-binding salivary protein family. Post-translationally, not glycosylated.

It is found in the secreted. The sequence is that of Allergen Arg r 1 from Argas reflexus (European pigeon tick).